Here is a 467-residue protein sequence, read N- to C-terminus: Ribulose bisphosphate carboxylase large chain (467 aa).

Positions 1–2 are excised as a propeptide; the sequence is MS. P3 is subject to N-acetylproline. An N6,N6,N6-trimethyllysine modification is found at K14. N123 and T173 together coordinate substrate. K175 serves as the catalytic Proton acceptor. Residue K177 coordinates substrate. Residues K201, D203, and E204 each coordinate Mg(2+). K201 carries the post-translational modification N6-carboxylysine. H294 functions as the Proton acceptor in the catalytic mechanism. Positions 295, 327, and 379 each coordinate substrate.

It belongs to the RuBisCO large chain family. Type I subfamily. In terms of assembly, heterohexadecamer of 8 large chains and 8 small chains; disulfide-linked. The disulfide link is formed within the large subunit homodimers. The cofactor is Mg(2+). The disulfide bond which can form in the large chain dimeric partners within the hexadecamer appears to be associated with oxidative stress and protein turnover.

It is found in the plastid. The protein resides in the chloroplast. It carries out the reaction 2 (2R)-3-phosphoglycerate + 2 H(+) = D-ribulose 1,5-bisphosphate + CO2 + H2O. The catalysed reaction is D-ribulose 1,5-bisphosphate + O2 = 2-phosphoglycolate + (2R)-3-phosphoglycerate + 2 H(+). In terms of biological role, ruBisCO catalyzes two reactions: the carboxylation of D-ribulose 1,5-bisphosphate, the primary event in carbon dioxide fixation, as well as the oxidative fragmentation of the pentose substrate in the photorespiration process. Both reactions occur simultaneously and in competition at the same active site. This chain is Ribulose bisphosphate carboxylase large chain, found in Phoenix reclinata (Senegal date palm).